Here is a 467-residue protein sequence, read N- to C-terminus: Geranylgeranyl diphosphate reductase, chloroplastic (467 aa).

Residues 1–43 (MATTVTLKSFTGLRQSSTEQTNFVSHVPSSLSLPQRRTSLRVT) constitute a chloroplast transit peptide.

It belongs to the geranylgeranyl reductase family. ChlP subfamily. In terms of assembly, part of the FLU-containing chloroplast membrane complex composed of FLU, CRD1, PORB, PORC, CHLP and HEMA1.

Its subcellular location is the plastid. It localises to the chloroplast membrane. The catalysed reaction is phytyl diphosphate + 3 NADP(+) = geranylgeranyl diphosphate + 3 NADPH + 3 H(+). Its pathway is porphyrin-containing compound metabolism; chlorophyll biosynthesis. It functions in the pathway cofactor biosynthesis; tocopherol biosynthesis. Catalyzes the reduction of geranylgeranyl diphosphate to phytyl diphosphate, providing phytol for both tocopherol and chlorophyll synthesis. This is Geranylgeranyl diphosphate reductase, chloroplastic (CHLP) from Arabidopsis thaliana (Mouse-ear cress).